A 447-amino-acid polypeptide reads, in one-letter code: Xylose isomerase (447 aa).

Catalysis depends on residues His102 and Asp105. Mg(2+)-binding residues include Glu233, Glu269, His272, Asp297, Asp308, Asp310, and Asp340.

This sequence belongs to the xylose isomerase family. As to quaternary structure, homotetramer. Mg(2+) serves as cofactor.

Its subcellular location is the cytoplasm. The enzyme catalyses alpha-D-xylose = alpha-D-xylulofuranose. This chain is Xylose isomerase, found in Pediococcus pentosaceus (strain ATCC 25745 / CCUG 21536 / LMG 10740 / 183-1w).